The chain runs to 212 residues: ATP-dependent dethiobiotin synthetase BioD (212 aa).

13 to 18 (GIGKTV) is a binding site for ATP. T17 contacts Mg(2+). K33 is an active-site residue. Mg(2+) is bound at residue E100. ATP-binding positions include 100 to 103 (EGAG) and 184 to 186 (PHV).

It belongs to the dethiobiotin synthetase family. In terms of assembly, homodimer. Requires Mg(2+) as cofactor.

The protein localises to the cytoplasm. The catalysed reaction is (7R,8S)-7,8-diammoniononanoate + CO2 + ATP = (4R,5S)-dethiobiotin + ADP + phosphate + 3 H(+). Its pathway is cofactor biosynthesis; biotin biosynthesis; biotin from 7,8-diaminononanoate: step 1/2. Catalyzes a mechanistically unusual reaction, the ATP-dependent insertion of CO2 between the N7 and N8 nitrogen atoms of 7,8-diaminopelargonic acid (DAPA, also called 7,8-diammoniononanoate) to form a ureido ring. This chain is ATP-dependent dethiobiotin synthetase BioD, found in Nitrobacter hamburgensis (strain DSM 10229 / NCIMB 13809 / X14).